We begin with the raw amino-acid sequence, 717 residues long: Probable inactive histone-lysine N-methyltransferase SUVR2 (717 aa).

The segment covering 61-73 has biased composition (basic and acidic residues); sequence QAIQESEEKKADE. The interval 61 to 136 is disordered; the sequence is QAIQESEEKK…LGSPTLEGPS (76 aa). Residues 120-130 are compositionally biased toward low complexity; sequence SALASPSLGSP. Zn(2+) contacts are provided by Cys-445, Cys-446, Cys-449, Cys-453, Cys-462, Cys-529, Cys-533, Cys-535, and Cys-539. The 90-residue stretch at 458 to 547 folds into the Pre-SET domain; it reads MACRCATAFN…NCGNRVVQQG (90 aa). An SET domain is found at 550-679; that stretch reads NKLQVFFTPN…AMEELTWDYG (130 aa). Residues 561 to 563 and 635 to 636 contribute to the S-adenosyl-L-methionine site; these read RGW and NH. Cys-638 serves as a coordination point for Zn(2+). Tyr-678 serves as a coordination point for S-adenosyl-L-methionine. The Post-SET domain occupies 690 to 706; that stretch reads SPFHCQCGSDFCRVRKQ. Zn(2+) is bound by residues Cys-694, Cys-696, and Cys-701.

It belongs to the class V-like SAM-binding methyltransferase superfamily. Histone-lysine methyltransferase family. As to quaternary structure, interacts with SUVR1, CHR19, CHR28 and itself. Interacts with CHR27.

It is found in the nucleus. The protein localises to the chromosome. Functionally, probable inactive histone-lysine methyltransferase that acts as regulator of transctiptional gene silencing independently of histone H3K9 methylation. Contributes to transcriptional gene silencing at RNA-directed DNA methylation (RdDM) target loci but also at RdDM-independent target loci. Forms a complex with SUVR1 and associates with the SNF2-related chromatin-remodeling proteins CHR19, CHR27, and CHR28, thereby mediating nucleosome positioning and transcriptional silencing. Does not possess histone-lysine methyltransferase activity in vitro, and the conserved catalytic sites of SUVR2 are dispensable for its function in transcriptional gene silencing. This Arabidopsis thaliana (Mouse-ear cress) protein is Probable inactive histone-lysine N-methyltransferase SUVR2 (SUVR2).